The sequence spans 307 residues: MEGVVLLHKPKGMTSHDCVFKLRKILREKRIGHTGTLDPDVTGVLPICVGRATKIAQFLTSETKTYEGEVTLGFSTTTEDASGEVVETKNVDRTITRMEVEKVLAELTGTIEQMPPMFSAVKVNGKKLYEYARAGQEVERPVRTITIHEFVLLDDREVFEGENISFRFRVTCSKGTYVRTLAVMIGEKLGFPSHMSHLVRTASGEFLLEDCISFEEIEENVQNGTVESIFISIDEALSKFPKMVVDEKQAEKIKNGMFLKNELEITAPFITVFDKNDRCLAIYEHHPKHPGMLKPMKVLVNNQELKL.

Catalysis depends on Asp38, which acts as the Nucleophile.

This sequence belongs to the pseudouridine synthase TruB family. Type 1 subfamily.

The catalysed reaction is uridine(55) in tRNA = pseudouridine(55) in tRNA. Its function is as follows. Responsible for synthesis of pseudouridine from uracil-55 in the psi GC loop of transfer RNAs. This is tRNA pseudouridine synthase B from Bacillus cereus (strain ATCC 14579 / DSM 31 / CCUG 7414 / JCM 2152 / NBRC 15305 / NCIMB 9373 / NCTC 2599 / NRRL B-3711).